The chain runs to 269 residues: Thiazole synthase (269 aa).

Lysine 105 acts as the Schiff-base intermediate with DXP in catalysis. Residues glycine 166, 192 to 193 (AG), and 214 to 215 (NT) each bind 1-deoxy-D-xylulose 5-phosphate. The tract at residues 245–269 (AMSAQDAAQPSTPVLGTPFWHHDHG) is disordered.

This sequence belongs to the ThiG family. In terms of assembly, homotetramer. Forms heterodimers with either ThiH or ThiS.

The protein resides in the cytoplasm. It carries out the reaction [ThiS sulfur-carrier protein]-C-terminal-Gly-aminoethanethioate + 2-iminoacetate + 1-deoxy-D-xylulose 5-phosphate = [ThiS sulfur-carrier protein]-C-terminal Gly-Gly + 2-[(2R,5Z)-2-carboxy-4-methylthiazol-5(2H)-ylidene]ethyl phosphate + 2 H2O + H(+). It functions in the pathway cofactor biosynthesis; thiamine diphosphate biosynthesis. In terms of biological role, catalyzes the rearrangement of 1-deoxy-D-xylulose 5-phosphate (DXP) to produce the thiazole phosphate moiety of thiamine. Sulfur is provided by the thiocarboxylate moiety of the carrier protein ThiS. In vitro, sulfur can be provided by H(2)S. The polypeptide is Thiazole synthase (Paracidovorax citrulli (strain AAC00-1) (Acidovorax citrulli)).